Reading from the N-terminus, the 103-residue chain is Cell division topological specificity factor (103 aa).

It belongs to the MinE family.

In terms of biological role, prevents the cell division inhibition by proteins MinC and MinD at internal division sites while permitting inhibition at polar sites. This ensures cell division at the proper site by restricting the formation of a division septum at the midpoint of the long axis of the cell. In Prochlorococcus marinus (strain MIT 9211), this protein is Cell division topological specificity factor.